The chain runs to 439 residues: GTPase Obg (439 aa).

Residues 1–159 (MAFVDQAQIE…RNLKLELKVL (159 aa)) enclose the Obg domain. The region spanning 160–336 (ADVGLVGFPS…LMRLTADMLA (177 aa)) is the OBG-type G domain. Residues 166–173 (GFPSAGKS), 191–195 (FTTLS), 213–216 (DLPG), 283–286 (TKMD), and 317–319 (SSI) contribute to the GTP site. Mg(2+) contacts are provided by Ser173 and Thr193. Positions 338-357 (APAPESYRPETKNDTSEKSY) are disordered. Residues 344 to 354 (YRPETKNDTSE) are compositionally biased toward basic and acidic residues. The 82-residue stretch at 358 to 439 (TFKPETHDFT…NSDFVFEFSE (82 aa)) folds into the OCT domain.

Belongs to the TRAFAC class OBG-HflX-like GTPase superfamily. OBG GTPase family. As to quaternary structure, monomer. Requires Mg(2+) as cofactor.

It localises to the cytoplasm. Its function is as follows. An essential GTPase which binds GTP, GDP and possibly (p)ppGpp with moderate affinity, with high nucleotide exchange rates and a fairly low GTP hydrolysis rate. Plays a role in control of the cell cycle, stress response, ribosome biogenesis and in those bacteria that undergo differentiation, in morphogenesis control. In Leuconostoc mesenteroides subsp. mesenteroides (strain ATCC 8293 / DSM 20343 / BCRC 11652 / CCM 1803 / JCM 6124 / NCDO 523 / NBRC 100496 / NCIMB 8023 / NCTC 12954 / NRRL B-1118 / 37Y), this protein is GTPase Obg.